A 305-amino-acid chain; its full sequence is tRNA pseudouridine synthase B (305 aa).

The active-site Nucleophile is Asp48.

This sequence belongs to the pseudouridine synthase TruB family. Type 1 subfamily.

It catalyses the reaction uridine(55) in tRNA = pseudouridine(55) in tRNA. In terms of biological role, responsible for synthesis of pseudouridine from uracil-55 in the psi GC loop of transfer RNAs. In Pseudomonas putida (strain GB-1), this protein is tRNA pseudouridine synthase B.